Reading from the N-terminus, the 244-residue chain is Chalcone--flavanone isomerase (244 aa).

Substrate contacts are provided by Thr45, Asn110, and Ser187.

It belongs to the chalcone isomerase family.

The enzyme catalyses a chalcone = a flavanone.. It functions in the pathway secondary metabolite biosynthesis; flavonoid biosynthesis. Functionally, catalyzes the intramolecular cyclization of bicyclic chalcones into tricyclic (S)-flavanones. Responsible for the isomerization of 4,2',4',6'-tetrahydroxychalcone (also termed chalcone) into naringenin. The sequence is that of Chalcone--flavanone isomerase (CHI) from Nicotiana tabacum (Common tobacco).